A 227-amino-acid chain; its full sequence is NADH-quinone oxidoreductase subunit C (227 aa).

Belongs to the complex I 30 kDa subunit family. As to quaternary structure, NDH-1 is composed of 14 different subunits. Subunits NuoB, C, D, E, F, and G constitute the peripheral sector of the complex.

The protein localises to the cell inner membrane. It catalyses the reaction a quinone + NADH + 5 H(+)(in) = a quinol + NAD(+) + 4 H(+)(out). Its function is as follows. NDH-1 shuttles electrons from NADH, via FMN and iron-sulfur (Fe-S) centers, to quinones in the respiratory chain. The immediate electron acceptor for the enzyme in this species is believed to be ubiquinone. Couples the redox reaction to proton translocation (for every two electrons transferred, four hydrogen ions are translocated across the cytoplasmic membrane), and thus conserves the redox energy in a proton gradient. In Coxiella burnetii (strain Dugway 5J108-111), this protein is NADH-quinone oxidoreductase subunit C.